The following is a 141-amino-acid chain: Heavy metal-associated isoprenylated plant protein 29 (141 aa).

The HMA domain occupies 1–59; it reads MEVPMDCPGCENKVRKALEKMNGVHDVQIDIKQQRVTVTGSAEQKKVLKVARNVTKRDI. 2 residues coordinate a metal cation: C7 and C10. At C138 the chain carries Cysteine methyl ester. C138 is lipidated: S-farnesyl cysteine. The propeptide at 139-141 is removed in mature form; it reads SIM.

The protein belongs to the HIPP family.

Functionally, heavy-metal-binding protein. The chain is Heavy metal-associated isoprenylated plant protein 29 from Arabidopsis thaliana (Mouse-ear cress).